A 356-amino-acid chain; its full sequence is MAIDENKQKALAAALGQIEKQFGKGSIMRLGEDRSMDVETISTGSLSLDIALGAGGLPMGRIVEIYGPESSGKTTLTLQVIAAAQREGKTCAFIDAEHALDPIYAKKLGVDIDNLLCSQPDTGEQALEICDALTRSGAVDVIIVDSVAALTPKAEIEGEIGDSHMGLAARMMSQAMRKLAGNLKNANTLLIFINQIRMKIGVMFGNPETTTGGNALKFYASVRLDIRRIGAVKDGDVVVGSETRVKVVKNKIAAPFKQAEFQILYGEGININGELVDLGVKHKLIEKAGAWYSYNGDKIGQGKANASNYLKENPAIAAELDKKLREMLLNGGNGEQPVAAATAEFADGVDETNEEF.

Residue 67–74 (GPESSGKT) coordinates ATP.

This sequence belongs to the RecA family.

It localises to the cytoplasm. In terms of biological role, can catalyze the hydrolysis of ATP in the presence of single-stranded DNA, the ATP-dependent uptake of single-stranded DNA by duplex DNA, and the ATP-dependent hybridization of homologous single-stranded DNAs. It interacts with LexA causing its activation and leading to its autocatalytic cleavage. The protein is Protein RecA of Yersinia pseudotuberculosis serotype I (strain IP32953).